The sequence spans 146 residues: MRYSCVLLLLATVACLLIPQTGGSTATTTSTSASATTTTSASATTTTASDTTTTTAATTTTSSSSSKSKKKKRTYHYTRHVYRPKRIRHIYRHKADDDESSTDRTSTRSRRRRRSSSSSSSSGSTSSRSGNSRIRRRRARSARRLS.

The first 23 residues, 1–23 (MRYSCVLLLLATVACLLIPQTGG), serve as a signal peptide directing secretion. The tract at residues 23–146 (GSTATTTSTS…RRARSARRLS (124 aa)) is disordered. Over residues 24 to 66 (STATTTSTSASATTTTSASATTTTASDTTTTTAATTTTSSSSS) the composition is skewed to low complexity. Repeat copies occupy residues 31–38 (TSASATTT), 39–46 (TSASATTT), 47–53 (TASDTTT), and 54–61 (TTAATTTT). The segment at 31 to 61 (TSASATTTTSASATTTTASDTTTTTAATTTT) is 4 X 8 AA approximate tandem repeats of T-S-A-S-A-T-T-T. A compositionally biased stretch (basic residues) spans 67–92 (KSKKKKRTYHYTRHVYRPKRIRHIYR). Basic and acidic residues predominate over residues 93 to 106 (HKADDDESSTDRTS). Residues 116-132 (SSSSSSSGSTSSRSGNS) are compositionally biased toward low complexity. Over residues 133–146 (RIRRRRARSARRLS) the composition is skewed to basic residues.

As to expression, salivary gland specific.

It localises to the secreted. The sequence is that of Protein new-glue 3 (ng3) from Drosophila melanogaster (Fruit fly).